The following is a 246-amino-acid chain: Biosynthetic peptidoglycan transglycosylase (246 aa).

Residues Trp20–Leu42 form a helical membrane-spanning segment.

This sequence belongs to the glycosyltransferase 51 family.

It localises to the cell inner membrane. It catalyses the reaction [GlcNAc-(1-&gt;4)-Mur2Ac(oyl-L-Ala-gamma-D-Glu-L-Lys-D-Ala-D-Ala)](n)-di-trans,octa-cis-undecaprenyl diphosphate + beta-D-GlcNAc-(1-&gt;4)-Mur2Ac(oyl-L-Ala-gamma-D-Glu-L-Lys-D-Ala-D-Ala)-di-trans,octa-cis-undecaprenyl diphosphate = [GlcNAc-(1-&gt;4)-Mur2Ac(oyl-L-Ala-gamma-D-Glu-L-Lys-D-Ala-D-Ala)](n+1)-di-trans,octa-cis-undecaprenyl diphosphate + di-trans,octa-cis-undecaprenyl diphosphate + H(+). The protein operates within cell wall biogenesis; peptidoglycan biosynthesis. Its function is as follows. Peptidoglycan polymerase that catalyzes glycan chain elongation from lipid-linked precursors. The polypeptide is Biosynthetic peptidoglycan transglycosylase (Xanthomonas axonopodis pv. citri (strain 306)).